We begin with the raw amino-acid sequence, 477 residues long: Aspartyl/glutamyl-tRNA(Asn/Gln) amidotransferase subunit B (477 aa).

This sequence belongs to the GatB/GatE family. GatB subfamily. In terms of assembly, heterotrimer of A, B and C subunits.

The enzyme catalyses L-glutamyl-tRNA(Gln) + L-glutamine + ATP + H2O = L-glutaminyl-tRNA(Gln) + L-glutamate + ADP + phosphate + H(+). It catalyses the reaction L-aspartyl-tRNA(Asn) + L-glutamine + ATP + H2O = L-asparaginyl-tRNA(Asn) + L-glutamate + ADP + phosphate + 2 H(+). Allows the formation of correctly charged Asn-tRNA(Asn) or Gln-tRNA(Gln) through the transamidation of misacylated Asp-tRNA(Asn) or Glu-tRNA(Gln) in organisms which lack either or both of asparaginyl-tRNA or glutaminyl-tRNA synthetases. The reaction takes place in the presence of glutamine and ATP through an activated phospho-Asp-tRNA(Asn) or phospho-Glu-tRNA(Gln). This chain is Aspartyl/glutamyl-tRNA(Asn/Gln) amidotransferase subunit B, found in Ligilactobacillus salivarius (strain UCC118) (Lactobacillus salivarius).